Consider the following 373-residue polypeptide: Glutamate 5-kinase (373 aa).

Lysine 12 lines the ATP pocket. Residues serine 52, aspartate 139, and asparagine 154 each coordinate substrate. Residue 216–222 coordinates ATP; the sequence is TGGMVTK. The 79-residue stretch at 281–359 folds into the PUA domain; the sequence is RGSICVDDGA…QELNAVLGGN (79 aa).

It belongs to the glutamate 5-kinase family.

The protein resides in the cytoplasm. The catalysed reaction is L-glutamate + ATP = L-glutamyl 5-phosphate + ADP. The protein operates within amino-acid biosynthesis; L-proline biosynthesis; L-glutamate 5-semialdehyde from L-glutamate: step 1/2. In terms of biological role, catalyzes the transfer of a phosphate group to glutamate to form L-glutamate 5-phosphate. This chain is Glutamate 5-kinase, found in Dehalococcoides mccartyi (strain CBDB1).